The primary structure comprises 140 residues: Calcitonin (140 aa).

The signal sequence occupies residues 1 to 25 (MGFWKFSPFLPLSILVLYQVGIIQA). A propeptide spanning residues 26–81 (APFRSALESLPDPAVLPEEESRLLLAALVKDYVQMKVRALEQEQETGGASLDSPRA) is cleaved from the precursor. A disulfide bridge links cysteine 84 with cysteine 90. A Proline amide modification is found at proline 115. Positions 120 to 140 (VMARGLERDHGPHIGTSQDAY) are excised as a propeptide.

Belongs to the calcitonin family.

It localises to the secreted. In terms of biological role, calcitonin is a peptide hormone that causes a rapid but short-lived drop in the level of calcium and phosphate in blood by promoting the incorporation of those ions in the bones. Calcitonin function is mediated by the calcitonin receptor/CALCR and the CALCR-RAMP2 (AMYR2) receptor complex. The protein is Calcitonin (CALCA) of Equus caballus (Horse).